The chain runs to 303 residues: Bifunctional protein FolD 2 (303 aa).

NADP(+) contacts are provided by residues Gly-169–Ser-171, Ser-194, and Ile-235.

This sequence belongs to the tetrahydrofolate dehydrogenase/cyclohydrolase family. Homodimer.

The catalysed reaction is (6R)-5,10-methylene-5,6,7,8-tetrahydrofolate + NADP(+) = (6R)-5,10-methenyltetrahydrofolate + NADPH. It catalyses the reaction (6R)-5,10-methenyltetrahydrofolate + H2O = (6R)-10-formyltetrahydrofolate + H(+). The protein operates within one-carbon metabolism; tetrahydrofolate interconversion. Its function is as follows. Catalyzes the oxidation of 5,10-methylenetetrahydrofolate to 5,10-methenyltetrahydrofolate and then the hydrolysis of 5,10-methenyltetrahydrofolate to 10-formyltetrahydrofolate. The chain is Bifunctional protein FolD 2 from Pseudomonas putida (strain GB-1).